The sequence spans 86 residues: Acyl carrier protein (86 aa).

The Carrier domain occupies 2–82; sequence ATVFERVKKV…AVVDYLKSKG (81 aa). Ser37 carries the post-translational modification O-(pantetheine 4'-phosphoryl)serine.

This sequence belongs to the acyl carrier protein (ACP) family. Post-translationally, 4'-phosphopantetheine is transferred from CoA to a specific serine of apo-ACP by AcpS. This modification is essential for activity because fatty acids are bound in thioester linkage to the sulfhydryl of the prosthetic group.

Its subcellular location is the cytoplasm. Its pathway is lipid metabolism; fatty acid biosynthesis. Its function is as follows. Carrier of the growing fatty acid chain in fatty acid biosynthesis. The chain is Acyl carrier protein from Dehalococcoides mccartyi (strain ATCC BAA-2266 / KCTC 15142 / 195) (Dehalococcoides ethenogenes (strain 195)).